Here is a 250-residue protein sequence, read N- to C-terminus: Golgi SNAP receptor complex member 1 (250 aa).

A2 bears the N-acetylalanine mark. The Cytoplasmic segment spans residues 2–229; it reads AAGTSNYWED…QRINLRKRRD (228 aa). Residues 9 to 30 are a coiled coil; that stretch reads WEDLRKQARQLENELDLKLVSF. A disordered region spans residues 38–59; it reads SHSSARDGGRDRYSSDTTPLLN. Basic and acidic residues predominate over residues 41 to 51; sequence SARDGGRDRYS. A coiled-coil region spans residues 68 to 95; the sequence is ETMAIEIEQLLARLTGVNDKMAEYTNSA. A Phosphoserine modification is found at S141. A helical; Anchor for type IV membrane protein membrane pass occupies residues 230-250; sequence SLILGGVIGICTILLLLYAFH.

This sequence belongs to the GOSR1 family. As to quaternary structure, component of several multiprotein Golgi SNARE complexes. Identified in a SNARE complex with BET1, STX5 and YKT6, in a SNARE complex with BET1L, STX5 and YKT6, in a SNARE complex with STX5, GOSR2, SEC22B and BET1, and in complex with STX5 and COG3. Interacts with GABARAPL2.

The protein resides in the golgi apparatus membrane. Functionally, involved in transport from the ER to the Golgi apparatus as well as in intra-Golgi transport. It belongs to a super-family of proteins called t-SNAREs or soluble NSF (N-ethylmaleimide-sensitive factor) attachment protein receptor. May play a protective role against hydrogen peroxide induced cytotoxicity under glutathione depleted conditions in neuronal cells by regulating the intracellular ROS levels via inhibition of p38 MAPK (MAPK11, MAPK12, MAPK13 and MAPK14). Participates in docking and fusion stage of ER to cis-Golgi transport. Plays an important physiological role in VLDL-transport vesicle-Golgi fusion and thus in VLDL delivery to the hepatic cis-Golgi. This Cricetulus griseus (Chinese hamster) protein is Golgi SNAP receptor complex member 1 (GOSR1).